Here is a 354-residue protein sequence, read N- to C-terminus: 3-dehydroquinate synthase (354 aa).

Residues D39, Y45, 68-71 (EKTK), 100-104 (GATGD), 124-125 (TT), K136, K145, and 163-166 (FLKT) each bind NAD(+). E178, H242, and H256 together coordinate Zn(2+).

It belongs to the sugar phosphate cyclases superfamily. Dehydroquinate synthase family. NAD(+) is required as a cofactor. The cofactor is Co(2+). It depends on Zn(2+) as a cofactor.

The protein resides in the cytoplasm. The catalysed reaction is 7-phospho-2-dehydro-3-deoxy-D-arabino-heptonate = 3-dehydroquinate + phosphate. It functions in the pathway metabolic intermediate biosynthesis; chorismate biosynthesis; chorismate from D-erythrose 4-phosphate and phosphoenolpyruvate: step 2/7. In terms of biological role, catalyzes the conversion of 3-deoxy-D-arabino-heptulosonate 7-phosphate (DAHP) to dehydroquinate (DHQ). The protein is 3-dehydroquinate synthase of Staphylococcus aureus (strain MRSA252).